The chain runs to 103 residues: L-rhamnose mutarotase (103 aa).

Substrate is bound at residue Tyr18. The active-site Proton donor is the His22. Substrate is bound by residues Tyr41 and 76 to 77 (WW).

Belongs to the rhamnose mutarotase family. Homodimer.

It localises to the cytoplasm. The enzyme catalyses alpha-L-rhamnose = beta-L-rhamnose. The protein operates within carbohydrate metabolism; L-rhamnose metabolism. Involved in the anomeric conversion of L-rhamnose. The sequence is that of L-rhamnose mutarotase from Enterococcus faecalis (strain ATCC 700802 / V583).